Here is a 247-residue protein sequence, read N- to C-terminus: Oil body-associated protein 2A (247 aa).

A disordered region spans residues 1 to 26; the sequence is MASSDERPGAYPARDGSENLPPGDPK.

The protein belongs to the OBAP family.

The protein is Oil body-associated protein 2A of Arabidopsis thaliana (Mouse-ear cress).